Here is a 316-residue protein sequence, read N- to C-terminus: Olfactory receptor 2T11 (316 aa).

Residues 1–22 are Extracellular-facing; sequence MTNTSSSDFTLLGLLVNSEAAG. Residue Asn-3 is glycosylated (N-linked (GlcNAc...) asparagine). A helical transmembrane segment spans residues 23–46; sequence IVFTVILAVFLGAVTANLVMIFLI. At 47-54 the chain is on the cytoplasmic side; it reads QVDSRLHT. Residues 55-76 traverse the membrane as a helical segment; that stretch reads PMYFLLSQLSIMDTLFICTTVP. The Extracellular segment spans residues 77–97; sequence KLLADMVSKEKIISFVACGIQ. The cysteines at positions 94 and 186 are disulfide-linked. A helical membrane pass occupies residues 98 to 117; that stretch reads IFLYLTMIGSEFFLLGLMAY. The Cytoplasmic portion of the chain corresponds to 118-136; it reads DCYVAVCNPLRYPVLMNRK. Residues 137-155 traverse the membrane as a helical segment; sequence KCLLLAAGAWFGGSLDGFL. The Extracellular portion of the chain corresponds to 156–192; that stretch reads LTPITMNVPYCGSRSINHFFCEIPAVLKLACADTSLY. Residues 193–216 traverse the membrane as a helical segment; it reads ETLMYICCVLMLLIPISIISTSYS. Topologically, residues 217–233 are cytoplasmic; the sequence is LILLTIHRMPSAEGRKK. A helical transmembrane segment spans residues 234–256; it reads AFTTCSSHLTVVSIFYGAAFYTY. Residues 257 to 269 are Extracellular-facing; it reads VLPQSFHTPEQDK. The helical transmembrane segment at 270-289 threads the bilayer; sequence VVSAFYTIVTPMLNPLIYSL. Topologically, residues 290–316 are cytoplasmic; that stretch reads RNKDVIGAFKKVFACCSSAQKVATSDA.

The protein belongs to the G-protein coupled receptor 1 family.

The protein localises to the cell membrane. Its function is as follows. Odorant receptor. This Homo sapiens (Human) protein is Olfactory receptor 2T11 (OR2T11).